Consider the following 216-residue polypeptide: Pyridoxine/pyridoxamine 5'-phosphate oxidase (216 aa).

Residues Arg9–Tyr12 and Arg67 contribute to the substrate site. FMN is bound by residues Arg62–Arg67, Tyr77–Thr78, Lys84, and Gln106. 3 residues coordinate substrate: Tyr124, Arg128, and Ser132. Residues Gln142–Ser143 and Trp188 contribute to the FMN site. Arg194–His196 lines the substrate pocket. Arg198 provides a ligand contact to FMN.

The protein belongs to the pyridoxamine 5'-phosphate oxidase family. Homodimer. FMN is required as a cofactor.

It catalyses the reaction pyridoxamine 5'-phosphate + O2 + H2O = pyridoxal 5'-phosphate + H2O2 + NH4(+). The enzyme catalyses pyridoxine 5'-phosphate + O2 = pyridoxal 5'-phosphate + H2O2. Its pathway is cofactor metabolism; pyridoxal 5'-phosphate salvage; pyridoxal 5'-phosphate from pyridoxamine 5'-phosphate: step 1/1. It functions in the pathway cofactor metabolism; pyridoxal 5'-phosphate salvage; pyridoxal 5'-phosphate from pyridoxine 5'-phosphate: step 1/1. In terms of biological role, catalyzes the oxidation of either pyridoxine 5'-phosphate (PNP) or pyridoxamine 5'-phosphate (PMP) into pyridoxal 5'-phosphate (PLP). The sequence is that of Pyridoxine/pyridoxamine 5'-phosphate oxidase from Psychrobacter cryohalolentis (strain ATCC BAA-1226 / DSM 17306 / VKM B-2378 / K5).